Consider the following 277-residue polypeptide: Large ribosomal subunit protein uL2 (277 aa).

Residues 219–277 (TVRGSVMNPNDHPHGGGEGKAPVGRKAPSTPWGKPALGLKTRNKKAKSDKLIVRRRNEK) are disordered. Residues 264-277 (AKSDKLIVRRRNEK) show a composition bias toward basic and acidic residues.

This sequence belongs to the universal ribosomal protein uL2 family. As to quaternary structure, part of the 50S ribosomal subunit. Forms a bridge to the 30S subunit in the 70S ribosome.

Functionally, one of the primary rRNA binding proteins. Required for association of the 30S and 50S subunits to form the 70S ribosome, for tRNA binding and peptide bond formation. It has been suggested to have peptidyltransferase activity; this is somewhat controversial. Makes several contacts with the 16S rRNA in the 70S ribosome. This is Large ribosomal subunit protein uL2 from Streptococcus pneumoniae serotype 2 (strain D39 / NCTC 7466).